Reading from the N-terminus, the 107-residue chain is Protein phosphatase 1 regulatory subunit INH3 (107 aa).

Residues 1–14 (MSTATRPSSSATTS) show a composition bias toward low complexity. 2 disordered regions span residues 1-40 (MSTATRPSSSATTSVILENPVSQSQPTERLVLRLNRKKKK) and 69-107 (PFDEDDSEEEDDNNHHCDHNHEHSESGEASSSNDSKAVD). The segment covering 71-80 (DEDDSEEEDD) has biased composition (acidic residues). Positions 81–94 (NNHHCDHNHEHSES) are enriched in basic and acidic residues. Positions 95 to 107 (GEASSSNDSKAVD) are enriched in low complexity.

Interacts with protein phosphatase 1. As to expression, expressed in roots, cotyledons, leaves, flowers and embryos.

Its function is as follows. Inhibitor of protein-phosphatase 1 (PP1). Binds to and inhibits PP1 activity. Required for early embryogenesis progression. This chain is Protein phosphatase 1 regulatory subunit INH3, found in Arabidopsis thaliana (Mouse-ear cress).